The sequence spans 375 residues: Trichodiene synthase (375 aa).

The protein belongs to the trichodiene synthase family.

The enzyme catalyses (2E,6E)-farnesyl diphosphate = trichodiene + diphosphate. Its pathway is sesquiterpene biosynthesis; trichothecene biosynthesis. Functionally, TS is a member of the terpene cyclase group of enzymes. It catalyzes the isomerization and cyclization of farnesyl pyro-phosphate to form trichodiene, the first cyclic intermediate in the biosynthetic pathway for trichothecenes. It serves to branch trichothecene biosynthesis from the isoprenoid pathway. The polypeptide is Trichodiene synthase (TRI5) (Fusarium boothii).